The primary structure comprises 638 residues: Neuroendocrine convertase 2 (638 aa).

The signal sequence occupies residues 1 to 25 (MRGGCISQGKAAAGLLFCVMVFASA). Residues 26–109 (ERPVFTNHFL…QQEGFNRKKR (84 aa)) constitute a propeptide that is removed on maturation. The Peptidase S8 domain occupies 129 to 453 (QWYLINTGQA…YGVLDAGAMV (325 aa)). Catalysis depends on charge relay system residues D167 and H208. Intrachain disulfides connect C225-C376 and C317-C347. N-linked (GlcNAc...) asparagine glycosylation occurs at N375. S384 acts as the Charge relay system in catalysis. The region spanning 461 to 597 (TVPERFHCVG…TLMLHGTQSA (137 aa)) is the P/Homo B domain. C468 and C494 are joined by a disulfide. N-linked (GlcNAc...) asparagine glycosylation is found at N514 and N524.

The protein belongs to the peptidase S8 family. Furin subfamily.

The protein localises to the cytoplasmic vesicle. Its subcellular location is the secretory vesicle. It localises to the secreted. The catalysed reaction is Release of protein hormones and neuropeptides from their precursors, generally by hydrolysis of -Lys-Arg-|- bonds.. Serine endopeptidase which is involved in the processing of hormone and other protein precursors at sites comprised of pairs of basic amino acid residues. Responsible for the release of glucagon from proglucagon in pancreatic A cells. This chain is Neuroendocrine convertase 2 (PCSK2), found in Bos taurus (Bovine).